The primary structure comprises 264 residues: Stress response regulator protein 1 (264 aa).

Residues 50–74 (IYSDCDNNKNNNDDDDDDDDYNKDT) are disordered. The segment covering 62-74 (DDDDDDDDYNKDT) has biased composition (acidic residues). In terms of domain architecture, Response regulatory spans 138-256 (RFLIVDDNII…LDLIGGSIDD (119 aa)). At Asp189 the chain carries 4-aspartylphosphate.

Its function is as follows. Required for stress adaptation, morphogenesis and virulence. The sequence is that of Stress response regulator protein 1 (SRR1) from Candida tropicalis (strain ATCC MYA-3404 / T1) (Yeast).